The following is a 138-amino-acid chain: Large ribosomal subunit protein uL16 (138 aa).

Residues 1 to 19 (MLIPKRVKYRRQHRPHRSG) are compositionally biased toward basic residues. Positions 1 to 24 (MLIPKRVKYRRQHRPHRSGVSKGG) are disordered.

This sequence belongs to the universal ribosomal protein uL16 family. As to quaternary structure, part of the 50S ribosomal subunit.

Functionally, binds 23S rRNA and is also seen to make contacts with the A and possibly P site tRNAs. The protein is Large ribosomal subunit protein uL16 of Corynebacterium diphtheriae (strain ATCC 700971 / NCTC 13129 / Biotype gravis).